The chain runs to 198 residues: NADH-quinone oxidoreductase subunit I (198 aa).

2 consecutive 4Fe-4S ferredoxin-type domains span residues 42 to 72 and 88 to 117; these read LNRW…VEGA and RVYE…MTND. Residues cysteine 52, cysteine 55, cysteine 58, cysteine 62, cysteine 97, cysteine 100, cysteine 103, and cysteine 107 each coordinate [4Fe-4S] cluster. Residues 137–198 form a disordered region; the sequence is APLKEGMEQP…DTQHKDEEAA (62 aa). A compositionally biased stretch (basic and acidic residues) spans 182 to 198; sequence AHRDDDNDTQHKDEEAA.

It belongs to the complex I 23 kDa subunit family. NDH-1 is composed of 14 different subunits. Subunits NuoA, H, J, K, L, M, N constitute the membrane sector of the complex. It depends on [4Fe-4S] cluster as a cofactor.

It is found in the cell membrane. It catalyses the reaction a quinone + NADH + 5 H(+)(in) = a quinol + NAD(+) + 4 H(+)(out). Its function is as follows. NDH-1 shuttles electrons from NADH, via FMN and iron-sulfur (Fe-S) centers, to quinones in the respiratory chain. The immediate electron acceptor for the enzyme in this species is believed to be ubiquinone. Couples the redox reaction to proton translocation (for every two electrons transferred, four hydrogen ions are translocated across the cytoplasmic membrane), and thus conserves the redox energy in a proton gradient. This chain is NADH-quinone oxidoreductase subunit I, found in Cutibacterium acnes (strain DSM 16379 / KPA171202) (Propionibacterium acnes).